Here is a 545-residue protein sequence, read N- to C-terminus: MTELTQQASWQALEKHSKSLPHMRELFSTEPERFGNMSTQACGLFLDYSKNRASQETMSLLFNLAKDSQLESKIKAMFAGHVINNTEQRAVLHTALRAPADKVINVDGNNIVAEVQQTLAKMGEFVESLTSGQWKGYTGKTITDVVSIGIGGSFLGPKIVSQALRPYWTGELNCHFVANVDGTSITEKLKGLDPQTTLFVMSSKSFGTQETLTNTLTAKEWFLSQGASQSDVAKHFVAVSSNVSKATEFGIDANNIFPMWDWVGGRYSLWSAIGLPIALLIGMDNFRQLLAGAHEMDEHFANTPLESNMPVIMGMFSLWYGNFFNAQSHVVLTYDHYLRGLPAYFQQLDMESNGKSVTLNGTDVDYSTGPIIWGGEGTNGQHAYHQLLHQGTALIPADFIMPLNSHNPVGEHHVQLASNCFGQTQALMQGRTFDEALAELNQSGLAEEQKLLIAKHKVMPGNKPSNTILMDKLTPSTLGSLIALYEHRTFVQGAIWQINSFDQWGVELGKQLGNDVLERLVADTEAKELDSSSNGLINLFKQGKI.

Residue Glu-351 is the Proton donor of the active site. Residues His-382 and Lys-510 contribute to the active site.

This sequence belongs to the GPI family.

The protein localises to the cytoplasm. The catalysed reaction is alpha-D-glucose 6-phosphate = beta-D-fructose 6-phosphate. It functions in the pathway carbohydrate biosynthesis; gluconeogenesis. Its pathway is carbohydrate degradation; glycolysis; D-glyceraldehyde 3-phosphate and glycerone phosphate from D-glucose: step 2/4. Catalyzes the reversible isomerization of glucose-6-phosphate to fructose-6-phosphate. The sequence is that of Glucose-6-phosphate isomerase from Shewanella pealeana (strain ATCC 700345 / ANG-SQ1).